The primary structure comprises 271 residues: ATP synthase subunit delta (271 aa).

This sequence belongs to the ATPase delta chain family. F-type ATPases have 2 components, F(1) - the catalytic core - and F(0) - the membrane proton channel. F(1) has five subunits: alpha(3), beta(3), gamma(1), delta(1), epsilon(1). F(0) has three main subunits: a(1), b(2) and c(10-14). The alpha and beta chains form an alternating ring which encloses part of the gamma chain. F(1) is attached to F(0) by a central stalk formed by the gamma and epsilon chains, while a peripheral stalk is formed by the delta and b chains.

Its subcellular location is the cell membrane. F(1)F(0) ATP synthase produces ATP from ADP in the presence of a proton or sodium gradient. F-type ATPases consist of two structural domains, F(1) containing the extramembraneous catalytic core and F(0) containing the membrane proton channel, linked together by a central stalk and a peripheral stalk. During catalysis, ATP synthesis in the catalytic domain of F(1) is coupled via a rotary mechanism of the central stalk subunits to proton translocation. In terms of biological role, this protein is part of the stalk that links CF(0) to CF(1). It either transmits conformational changes from CF(0) to CF(1) or is implicated in proton conduction. This is ATP synthase subunit delta from Corynebacterium kroppenstedtii (strain DSM 44385 / JCM 11950 / CIP 105744 / CCUG 35717).